A 349-amino-acid chain; its full sequence is MSKVRVLCVDDSALMRQLMTEIINSHPDMEMVAAAQDPLVARDLIKKFNPQVLTLDVEMPRMDGLDFLEKLMRLRPMPVVMVSSLTGKNSEITMRALELGAIDFVTKPQLGIREGMLAYSELIADKIRTAAKARLPQRVLENKPAMLSHTPLLSSEKLIAIGASTGGTEAIRAVLQPLPPTSPALLITQHMPPGFTRSFAERLNKLCQITVKEAEDGERVLPGHAYIAPGDRHLELARSGANYQVRIHDGPAVNRHRPSVDVLFRSVAQYAGRNAVGVILTGMGNDGAAGLLEMHRAGAYTLAQNEASCVVFGMPREAIAMGGVNDVVELNQISQRMLAQISSGQALRI.

Residues 5–122 (RVLCVDDSAL…REGMLAYSEL (118 aa)) form the Response regulatory domain. A 4-aspartylphosphate modification is found at Asp-56. The CheB-type methylesterase domain occupies 152–344 (LLSSEKLIAI…QRMLAQISSG (193 aa)). Catalysis depends on residues Ser-164, His-190, and Asp-286.

This sequence belongs to the CheB family. In terms of processing, phosphorylated by CheA. Phosphorylation of the N-terminal regulatory domain activates the methylesterase activity.

The protein resides in the cytoplasm. The catalysed reaction is [protein]-L-glutamate 5-O-methyl ester + H2O = L-glutamyl-[protein] + methanol + H(+). It catalyses the reaction L-glutaminyl-[protein] + H2O = L-glutamyl-[protein] + NH4(+). In terms of biological role, involved in chemotaxis. Part of a chemotaxis signal transduction system that modulates chemotaxis in response to various stimuli. Catalyzes the demethylation of specific methylglutamate residues introduced into the chemoreceptors (methyl-accepting chemotaxis proteins or MCP) by CheR. Also mediates the irreversible deamidation of specific glutamine residues to glutamic acid. The protein is Protein-glutamate methylesterase/protein-glutamine glutaminase of Yersinia pseudotuberculosis serotype I (strain IP32953).